The primary structure comprises 160 residues: Cytochrome b6-f complex subunit 4 (160 aa).

Transmembrane regions (helical) follow at residues 36–56 (LLYT…GLAV), 95–115 (LLGI…PFIE), and 127–147 (PIAM…GVAA).

This sequence belongs to the cytochrome b family. PetD subfamily. In terms of assembly, the 4 large subunits of the cytochrome b6-f complex are cytochrome b6, subunit IV (17 kDa polypeptide, PetD), cytochrome f and the Rieske protein, while the 4 small subunits are PetG, PetL, PetM and PetN. The complex functions as a dimer.

It localises to the cellular thylakoid membrane. In terms of biological role, component of the cytochrome b6-f complex, which mediates electron transfer between photosystem II (PSII) and photosystem I (PSI), cyclic electron flow around PSI, and state transitions. The chain is Cytochrome b6-f complex subunit 4 from Prochlorothrix hollandica.